The following is a 299-amino-acid chain: Hydrogenase maturation factor HypB (299 aa).

Ni(2+)-binding residues include Cys2, Cys5, and Cys7. The interval 18 to 57 (EVGDDGHGHHHHDGHHDHDHDHDHHRGDHEHDDHHHAEDG) is disordered. Residues 31 to 57 (GHHDHDHDHDHHRGDHEHDDHHHAEDG) are compositionally biased toward basic and acidic residues. The tract at residues 107 to 268 (ALNFVSSPGS…LRVNPRLQTL (162 aa)) is G-domain. The Ni(2+) site is built by Cys167, His168, and Cys199. Residues Cys167, His168, and Cys199 each contribute to the Zn(2+) site.

Belongs to the SIMIBI class G3E GTPase family. HypB/HupM subfamily.

Functionally, involved in the maturation of [NiFe] hydrogenases. Required for nickel insertion into the metal center of the hydrogenase. Exhibits a low intrinsic GTPase activity, which is essential for nickel insertion. Is able to bind 4 nickel ions per subunit. Can also bind zinc. The polypeptide is Hydrogenase maturation factor HypB (Rhizobium leguminosarum bv. viciae).